The following is a 472-amino-acid chain: MEKGLALPQDFRDLVHSLKIRGRYVLFLAFVVIVFIFIEKENKIISRVSDKLKQIPHFVADANSTDPALLLSENASLLSLSELDSTFSHLRSRLHNLSLQLGVEPAMESQEAGAEKPSQQAGAGTRRHVLLMATTRTGSSFVGEFFNQQGNIFYLFEPLWHIERTVFFQQRGASAAGSALVYRDVLKQLLLCDLYVLEPFISPPPEDHLTQFLFRRGSSRSLCEDPVCTPFVKKVFEKYHCRNRRCGPLNVTLAGEACRRKDHVALKAVRIRQLEFLQPLVEDPRLDLRVIQLVRDPRAVLASRIVAFAGKYENWKKWLSEGQDQLSEDEVQRLRGNCESIRLSAELGLRQPAWLRGRYMLVRYEDVARRPLQKAREMYSFAGIPLTPQVEDWIQKNTQATRDSSDVYSTQKNSSEQFEKWRFSMPFKLAQVVQAACGPTMHLFGYKLARDAASLTNRSISLLEERGTFWVT.

At 1 to 19 (MEKGLALPQDFRDLVHSLK) the chain is on the cytoplasmic side. Residues 20-38 (IRGRYVLFLAFVVIVFIFI) traverse the membrane as a helical; Signal-anchor for type II membrane protein segment. Residues 39–472 (EKENKIISRV…LEERGTFWVT (434 aa)) are Lumenal-facing. Residues asparagine 63, asparagine 74, and asparagine 96 are each glycosylated (N-linked (GlcNAc...) asparagine). Position 135-141 (135-141 (TRTGSSF)) interacts with 3'-phosphoadenylyl sulfate. Residue asparagine 250 is glycosylated (N-linked (GlcNAc...) asparagine). 295 to 303 (RDPRAVLAS) lines the 3'-phosphoadenylyl sulfate pocket. N-linked (GlcNAc...) asparagine glycans are attached at residues asparagine 413 and asparagine 457.

Belongs to the sulfotransferase 1 family. Gal/GlcNAc/GalNAc subfamily. Post-translationally, N-glycosylated. Widely expressed. Highly expressed in spleen, lung, eye and stomach. Constitutively expressed at low level during the mid- to late-gestation period. Expressed in the brain in a temporally controlled manner: peaks at 2 weeks after birth in the cerebellum, but at 3 weeks in the cerebrum. Localizes to stromal cells in the bone marrow, and stromal cells in the marginal zone and red pulp of the spleen, but the sense probe did not.

Its subcellular location is the golgi apparatus membrane. It catalyses the reaction chondroitin beta-D-glucuronate + n 3'-phosphoadenylyl sulfate = chondroitin 6'-sulfate + n adenosine 3',5'-bisphosphate + n H(+). The enzyme catalyses 3'-phosphoadenylyl sulfate + keratan = adenosine 3',5'-bisphosphate + keratan 6'-sulfate.. Sulfotransferase that utilizes 3'-phospho-5'-adenylyl sulfate (PAPS) as sulfonate donor to catalyze the transfer of sulfate to position 6 of the N-acetylgalactosamine (GalNAc) residue of chondroitin. Chondroitin sulfate constitutes the predominant proteoglycan present in cartilage and is distributed on the surfaces of many cells and extracellular matrices. Catalyzes with a lower efficiency the sulfation of Gal residues of keratan sulfate, another glycosaminoglycan. Can also catalyze the sulfation of the Gal residues in sialyl N-acetyllactosamine (sialyl LacNAc) oligosaccharides. May play a role in the maintenance of naive T-lymphocytes in the spleen. This is Carbohydrate sulfotransferase 3 (Chst3) from Mus musculus (Mouse).